The chain runs to 505 residues: Prenylcysteine oxidase 1 (505 aa).

An N-terminal signal peptide occupies residues 1–28 (MGRFAAALVGSLFWLGLLLCGLGSLASA). 3 N-linked (GlcNAc...) asparagine glycosylation sites follow: asparagine 196, asparagine 323, and asparagine 353.

The protein belongs to the prenylcysteine oxidase family. Requires FAD as cofactor. As to expression, highly expressed in the liver, kidney, heart and brain.

It localises to the lysosome. It carries out the reaction an S-polyprenyl-L-cysteine + O2 + H2O = a polyprenal + L-cysteine + H2O2. It catalyses the reaction S-(2E,6E)-farnesyl-L-cysteine + O2 + H2O = (2E,6E)-farnesal + L-cysteine + H2O2. The enzyme catalyses [(2E,6E,10E)-geranylgeranyl]-L-cysteine + O2 + H2O = (2E,6E,10E)-geranylgeranial + L-cysteine + H2O2. Its function is as follows. Prenylcysteine oxidase that cleaves the thioether bond of prenyl-L-cysteines, such as farnesylcysteine and geranylgeranylcysteine. Only active against free prenylcysteines and not prenylcysteine residues within prenylated proteins or peptides. Involved in the final step in the degradation of prenylated proteins, by degrading prenylcysteines after the protein has been degraded. In Mus musculus (Mouse), this protein is Prenylcysteine oxidase 1.